The sequence spans 279 residues: NAD kinase (279 aa).

The Proton acceptor role is filled by Asp63. Residues 63–64 (DG), Arg68, 133–134 (NE), and Asp163 each bind NAD(+).

The protein belongs to the NAD kinase family. Requires a divalent metal cation as cofactor.

The protein resides in the cytoplasm. The enzyme catalyses NAD(+) + ATP = ADP + NADP(+) + H(+). Its function is as follows. Involved in the regulation of the intracellular balance of NAD and NADP, and is a key enzyme in the biosynthesis of NADP. Catalyzes specifically the phosphorylation on 2'-hydroxyl of the adenosine moiety of NAD to yield NADP. The polypeptide is NAD kinase (Protochlamydia amoebophila (strain UWE25)).